Reading from the N-terminus, the 223-residue chain is Sigma non-opioid intracellular receptor 1 (223 aa).

Residues 1–9 are Lumenal-facing; the sequence is MPWAVGRRW. A targeting to endoplasmic reticulum-associated lipid droplets region spans residues 2–8; sequence PWAVGRR. A helical membrane pass occupies residues 10–30; it reads AWITLFLTIVAVLIQAVWLWL. At 31-223 the chain is on the cytoplasmic side; the sequence is GTQSFVFQRE…LTTYLFGQDP (193 aa). An important for ligand-binding region spans residues 99–106; that stretch reads SLSEYVLL. Residues 177 to 223 form a C-terminal hydrophobic region region; sequence VIPSTLAFALSDTIFSTQDFLTLFYTLRAYARGLRLELTTYLFGQDP.

This sequence belongs to the ERG2 family. As to quaternary structure, homotrimer. Interacts with KCNA2; cocaine consumption leads to increased interaction. Forms a ternary complex with ANK2 and ITPR3. The complex is disrupted by agonists. Interacts with KCNA4. Interacts with RNF112 in an oxidative stress-regulated manner. In terms of tissue distribution, expressed in ependymocytes and neurons throughout the CNS from the olfactory bulb to the spinal cord. Expressed by progenitor, mature and satellite oligodendrocytes and by Schwann cells (at protein level). Expressed in liver, intestine, kidney, brain, lung and heart. Expressed by retinal cells.

Its subcellular location is the nucleus inner membrane. The protein resides in the nucleus outer membrane. It is found in the nucleus envelope. It localises to the cytoplasmic vesicle. The protein localises to the endoplasmic reticulum membrane. Its subcellular location is the membrane. The protein resides in the lipid droplet. It is found in the cell junction. It localises to the cell membrane. The protein localises to the cell projection. Its subcellular location is the growth cone. The protein resides in the postsynaptic density membrane. Its function is as follows. Functions in lipid transport from the endoplasmic reticulum and is involved in a wide array of cellular functions probably through regulation of the biogenesis of lipid microdomains at the plasma membrane. Involved in the regulation of different receptors it plays a role in BDNF signaling and EGF signaling. Also regulates ion channels like the potassium channel and could modulate neurotransmitter release. Plays a role in calcium signaling through modulation together with ANK2 of the ITP3R-dependent calcium efflux at the endoplasmic reticulum. Plays a role in several other cell functions including proliferation, survival and death. Originally identified for its ability to bind various psychoactive drugs it is involved in learning processes, memory and mood alteration. Necessary for proper mitochondrial axonal transport in motor neurons, in particular the retrograde movement of mitochondria. Plays a role in protecting cells against oxidative stress-induced cell death via its interaction with RNF112. The protein is Sigma non-opioid intracellular receptor 1 (Sigmar1) of Rattus norvegicus (Rat).